The sequence spans 317 residues: Large ribosomal subunit protein uL10 (317 aa).

The tract at residues 286–317 is disordered; the sequence is AGAGAAAEKKEEAKKEESESEEDDDMGFGLFD. Residues 292–302 are compositionally biased toward basic and acidic residues; it reads AEKKEEAKKEE.

It belongs to the universal ribosomal protein uL10 family. In terms of assembly, P0 forms a pentameric complex by interaction with dimers of P1 and P2. Post-translationally, phosphorylated.

In terms of biological role, ribosomal protein P0 is the functional equivalent of E.coli protein L10. This Ceratitis capitata (Mediterranean fruit fly) protein is Large ribosomal subunit protein uL10 (RpLP0).